Consider the following 216-residue polypeptide: Phosphatidylserine decarboxylase proenzyme (216 aa).

Ser-185 serves as the catalytic Schiff-base intermediate with substrate; via pyruvic acid. Ser-185 carries the post-translational modification Pyruvic acid (Ser); by autocatalysis.

This sequence belongs to the phosphatidylserine decarboxylase family. PSD-A subfamily. In terms of assembly, heterodimer of a large membrane-associated beta subunit and a small pyruvoyl-containing alpha subunit. It depends on pyruvate as a cofactor. Is synthesized initially as an inactive proenzyme. Formation of the active enzyme involves a self-maturation process in which the active site pyruvoyl group is generated from an internal serine residue via an autocatalytic post-translational modification. Two non-identical subunits are generated from the proenzyme in this reaction, and the pyruvate is formed at the N-terminus of the alpha chain, which is derived from the carboxyl end of the proenzyme. The post-translation cleavage follows an unusual pathway, termed non-hydrolytic serinolysis, in which the side chain hydroxyl group of the serine supplies its oxygen atom to form the C-terminus of the beta chain, while the remainder of the serine residue undergoes an oxidative deamination to produce ammonia and the pyruvoyl prosthetic group on the alpha chain.

It localises to the cell membrane. It catalyses the reaction a 1,2-diacyl-sn-glycero-3-phospho-L-serine + H(+) = a 1,2-diacyl-sn-glycero-3-phosphoethanolamine + CO2. The protein operates within phospholipid metabolism; phosphatidylethanolamine biosynthesis; phosphatidylethanolamine from CDP-diacylglycerol: step 2/2. Its function is as follows. Catalyzes the formation of phosphatidylethanolamine (PtdEtn) from phosphatidylserine (PtdSer). In Nitrosomonas europaea (strain ATCC 19718 / CIP 103999 / KCTC 2705 / NBRC 14298), this protein is Phosphatidylserine decarboxylase proenzyme.